A 162-amino-acid chain; its full sequence is Phycoerythrocyanin alpha chain (162 aa).

Cys84 serves as a coordination point for (15Z)-phycoviolobilin.

It belongs to the phycobiliprotein family. In terms of assembly, heterodimer of an alpha and a beta chain. Post-translationally, contains one covalently linked bilin chromophore.

It localises to the cellular thylakoid membrane. In terms of biological role, light-harvesting photosynthetic bile pigment-protein from the phycobiliprotein complex. This Nostoc sp. (strain PCC 7120 / SAG 25.82 / UTEX 2576) protein is Phycoerythrocyanin alpha chain (pecA).